The following is a 205-amino-acid chain: UPF0301 protein AZC_0488 (205 aa).

The protein belongs to the UPF0301 (AlgH) family.

In Azorhizobium caulinodans (strain ATCC 43989 / DSM 5975 / JCM 20966 / LMG 6465 / NBRC 14845 / NCIMB 13405 / ORS 571), this protein is UPF0301 protein AZC_0488.